Here is a 661-residue protein sequence, read N- to C-terminus: DNA-directed RNA polymerase subunit beta' (661 aa).

Zn(2+) is bound by residues Cys69, Cys71, Cys87, and Cys90. Asp489, Asp491, and Asp493 together coordinate Mg(2+).

It belongs to the RNA polymerase beta' chain family. RpoC1 subfamily. As to quaternary structure, in plastids the minimal PEP RNA polymerase catalytic core is composed of four subunits: alpha, beta, beta', and beta''. When a (nuclear-encoded) sigma factor is associated with the core the holoenzyme is formed, which can initiate transcription. Mg(2+) serves as cofactor. Requires Zn(2+) as cofactor.

It localises to the plastid. The protein resides in the chloroplast. The catalysed reaction is RNA(n) + a ribonucleoside 5'-triphosphate = RNA(n+1) + diphosphate. In terms of biological role, DNA-dependent RNA polymerase catalyzes the transcription of DNA into RNA using the four ribonucleoside triphosphates as substrates. The sequence is that of DNA-directed RNA polymerase subunit beta' from Chaetosphaeridium globosum (Charophycean green alga).